A 376-amino-acid chain; its full sequence is MNIVEIAKNLIKCQSLSPYDAGCNKIIIKCLHNMGFYVEKMKFGKTENIWAYKGTGYTLLFAGHTDVVHAGNVKNWKYPPFSSKLKDGILYGRGSADMKGALAAMLIAAKKFFKSYKEPKGRLAFLITSDEEGSGSNGTKKVINVLLKRKEKIDCCLIGEPTGEKNIGDIVKNGRRGSLSVKIIIYGKQNHVAYAENNNNPIYHSNKIIGELLKTSWNDVQCILPKTTMQIIGIRSNIKKFTNITPSKVEIIINFRFNFKSNKKIIKEKIVSILKKYKYFYDIKCILHSDPFFTKTGNLLKSVIESVKIYQKITPCIINSGGTSDGRFIYKISKQIIELGLLNKTIHKDNEHIKVKDLLILCNIYQYILKKILIKN.

His-64 is a Zn(2+) binding site. Residue Asp-66 is part of the active site. Residue Asp-97 coordinates Zn(2+). Residue Glu-131 is the Proton acceptor of the active site. Residues Glu-132, Glu-160, and His-347 each contribute to the Zn(2+) site.

This sequence belongs to the peptidase M20A family. DapE subfamily. In terms of assembly, homodimer. Requires Zn(2+) as cofactor. The cofactor is Co(2+).

It carries out the reaction N-succinyl-(2S,6S)-2,6-diaminopimelate + H2O = (2S,6S)-2,6-diaminopimelate + succinate. It participates in amino-acid biosynthesis; L-lysine biosynthesis via DAP pathway; LL-2,6-diaminopimelate from (S)-tetrahydrodipicolinate (succinylase route): step 3/3. Functionally, catalyzes the hydrolysis of N-succinyl-L,L-diaminopimelic acid (SDAP), forming succinate and LL-2,6-diaminopimelate (DAP), an intermediate involved in the bacterial biosynthesis of lysine and meso-diaminopimelic acid, an essential component of bacterial cell walls. This is Succinyl-diaminopimelate desuccinylase from Wigglesworthia glossinidia brevipalpis.